The primary structure comprises 193 residues: MKIDPIELIKLQRFEELFEKYFTYYDDNTKALLENEKLYIEIGNKCVQFDELLDRFIKVLINFNLLENSKEFIINSILIKSIKNGFLKNLQYFLTTDNRNLFKISNEIIIKILLNSAIINDNITMVSYLLSILFPFLFFNNNQIISSQTIPRISTVTKEEKELLLSINEQLNSIKLITKMENYLKKTILFFDL.

This is an uncharacterized protein from Dictyostelium discoideum (Social amoeba).